Consider the following 362-residue polypeptide: Beta-ketoacyl-[acyl-carrier-protein] synthase III 2 (362 aa).

Active-site residues include Cys-113 and His-251. Residues 252-256 (QANIR) form an ACP-binding region. Asn-281 is a catalytic residue.

The protein belongs to the thiolase-like superfamily. FabH family. In terms of assembly, homodimer.

It localises to the cytoplasm. The catalysed reaction is malonyl-[ACP] + acetyl-CoA + H(+) = 3-oxobutanoyl-[ACP] + CO2 + CoA. The protein operates within lipid metabolism; fatty acid biosynthesis. Catalyzes the condensation reaction of fatty acid synthesis by the addition to an acyl acceptor of two carbons from malonyl-ACP. Catalyzes the first condensation reaction which initiates fatty acid synthesis and may therefore play a role in governing the total rate of fatty acid production. Possesses both acetoacetyl-ACP synthase and acetyl transacylase activities. Its substrate specificity determines the biosynthesis of branched-chain and/or straight-chain of fatty acids. This chain is Beta-ketoacyl-[acyl-carrier-protein] synthase III 2, found in Vibrio cholerae serotype O1 (strain ATCC 39315 / El Tor Inaba N16961).